A 347-amino-acid chain; its full sequence is Aromatic amino acid aminotransferase (347 aa).

N6-(pyridoxal phosphate)lysine is present on Lys214.

Belongs to the class-II pyridoxal-phosphate-dependent aminotransferase family. In terms of assembly, homodimer. Pyridoxal 5'-phosphate serves as cofactor.

The enzyme catalyses an aromatic L-alpha-amino acid + 2-oxoglutarate = an aromatic oxo-acid + L-glutamate. Functionally, aminotransferase that catalyzes the conversion of aromatic amino acids and 2-oxoglutarate into corresponding aromatic oxo acids and L-glutamate. This chain is Aromatic amino acid aminotransferase, found in Mycobacteroides abscessus (strain ATCC 19977 / DSM 44196 / CCUG 20993 / CIP 104536 / JCM 13569 / NCTC 13031 / TMC 1543 / L948) (Mycobacterium abscessus).